Consider the following 456-residue polypeptide: UPF0496 protein 4 (456 aa).

A helical membrane pass occupies residues 195 to 217 (VLMRALYGIESVTVFVCSIFVAV). The interval 368–390 (QDSNVKQANGSSDESALVVPERT) is disordered. Polar residues predominate over residues 371–381 (NVKQANGSSDE).

Belongs to the ROH1 family.

The protein localises to the membrane. The polypeptide is UPF0496 protein 4 (Oryza sativa subsp. japonica (Rice)).